The primary structure comprises 432 residues: Adenylosuccinate synthetase (432 aa).

Residues 12-18 (GDEGKGK) and 40-42 (GHT) contribute to the GTP site. Residue Asp13 is the Proton acceptor of the active site. Mg(2+) contacts are provided by Asp13 and Gly40. IMP-binding positions include 13 to 16 (DEGK), 38 to 41 (NAGH), Thr129, Arg143, Gln224, Thr239, and Arg303. The Proton donor role is filled by His41. 299 to 305 (VTTGRRR) contacts substrate. GTP contacts are provided by residues Arg305, 331 to 333 (KLD), and 413 to 415 (GVG).

This sequence belongs to the adenylosuccinate synthetase family. In terms of assembly, homodimer. The cofactor is Mg(2+).

It localises to the cytoplasm. It carries out the reaction IMP + L-aspartate + GTP = N(6)-(1,2-dicarboxyethyl)-AMP + GDP + phosphate + 2 H(+). Its pathway is purine metabolism; AMP biosynthesis via de novo pathway; AMP from IMP: step 1/2. In terms of biological role, plays an important role in the de novo pathway of purine nucleotide biosynthesis. Catalyzes the first committed step in the biosynthesis of AMP from IMP. In Mycobacterium avium (strain 104), this protein is Adenylosuccinate synthetase.